Here is a 423-residue protein sequence, read N- to C-terminus: Kynureninase (423 aa).

Residues leucine 105, serine 106, 133–136, aspartate 218, histidine 221, and tyrosine 243 each bind pyridoxal 5'-phosphate; that span reads FPSD. An N6-(pyridoxal phosphate)lysine modification is found at lysine 244. Tryptophan 273 and asparagine 301 together coordinate pyridoxal 5'-phosphate.

This sequence belongs to the kynureninase family. As to quaternary structure, homodimer. It depends on pyridoxal 5'-phosphate as a cofactor.

The enzyme catalyses L-kynurenine + H2O = anthranilate + L-alanine + H(+). It catalyses the reaction 3-hydroxy-L-kynurenine + H2O = 3-hydroxyanthranilate + L-alanine + H(+). It functions in the pathway amino-acid degradation; L-kynurenine degradation; L-alanine and anthranilate from L-kynurenine: step 1/1. It participates in cofactor biosynthesis; NAD(+) biosynthesis; quinolinate from L-kynurenine: step 2/3. Its function is as follows. Catalyzes the cleavage of L-kynurenine (L-Kyn) and L-3-hydroxykynurenine (L-3OHKyn) into anthranilic acid (AA) and 3-hydroxyanthranilic acid (3-OHAA), respectively. The protein is Kynureninase of Xanthomonas oryzae pv. oryzae (strain MAFF 311018).